Consider the following 561-residue polypeptide: uncharacterized protein (561 aa).

2 helical membrane-spanning segments follow: residues 29–49 (FIFN…KKII) and 80–100 (FLFH…ASII).

The protein resides in the cell membrane. This is an uncharacterized protein from Mycoplasma genitalium (strain ATCC 33530 / DSM 19775 / NCTC 10195 / G37) (Mycoplasmoides genitalium).